Here is a 60-residue protein sequence, read N- to C-terminus: Large ribosomal subunit protein uL30 (60 aa).

It belongs to the universal ribosomal protein uL30 family. In terms of assembly, part of the 50S ribosomal subunit.

The polypeptide is Large ribosomal subunit protein uL30 (Shewanella woodyi (strain ATCC 51908 / MS32)).